Reading from the N-terminus, the 174-residue chain is Large ribosomal subunit protein uL10 (174 aa).

The protein belongs to the universal ribosomal protein uL10 family. As to quaternary structure, part of the ribosomal stalk of the 50S ribosomal subunit. The N-terminus interacts with L11 and the large rRNA to form the base of the stalk. The C-terminus forms an elongated spine to which L12 dimers bind in a sequential fashion forming a multimeric L10(L12)X complex.

Its function is as follows. Forms part of the ribosomal stalk, playing a central role in the interaction of the ribosome with GTP-bound translation factors. The sequence is that of Large ribosomal subunit protein uL10 from Geobacter sulfurreducens (strain ATCC 51573 / DSM 12127 / PCA).